The sequence spans 490 residues: Apocarotenoid-15,15'-oxygenase (490 aa).

Histidine 183 contacts Fe cation. Serine 206 contacts substrate. Histidine 238 lines the Fe cation pocket. Phenylalanine 303 contacts substrate. Fe cation-binding residues include histidine 304 and histidine 484.

The protein belongs to the carotenoid oxygenase family. It depends on Fe(2+) as a cofactor.

It carries out the reaction all-trans-8'-apo-beta-carotenal + O2 = (2E,4E,6E)-2,6-dimethylocta-2,4,6-trienedial + all-trans-retinal. In terms of biological role, cleaves a number of carotenals and carotenols in the all-trans configuration at the 15-15' double bond producing retinal or retinol, respectively. Also shows activity toward lycopenals and the corresponding alcohols. Does not cleave beta-carotene or lycopene. The protein is Apocarotenoid-15,15'-oxygenase of Synechocystis sp. (strain ATCC 27184 / PCC 6803 / Kazusa).